A 136-amino-acid polypeptide reads, in one-letter code: MLSPKRTRFRKQHRGRMKGKSCRGNRICFGRYALQALEPAWITARQIEAGRRAITRYARRGGKIWVRIFPDKPVTLRPTETRMGSGKGSPEYWVAVVKPGRILYEMGGVSETVARAAISIAASKMPIRSQFIRLEI.

The disordered stretch occupies residues 1–20 (MLSPKRTRFRKQHRGRMKGK).

This sequence belongs to the universal ribosomal protein uL16 family. As to quaternary structure, part of the 50S ribosomal subunit.

It localises to the plastid. The protein resides in the chloroplast. This Agrostis stolonifera (Creeping bentgrass) protein is Large ribosomal subunit protein uL16c.